A 675-amino-acid polypeptide reads, in one-letter code: Gastrula zinc finger protein xFG20-1 (675 aa).

10 consecutive C2H2-type zinc fingers follow at residues F62 to H84, F90 to H112, F118 to H140, Y146 to H168, F174 to H196, H202 to H224, F257 to H279, F286 to H308, L344 to H366, and L373 to H395. Residues R302–S325 form a disordered region. Positions H304–S325 are enriched in polar residues. The segment covering T390–T407 has biased composition (polar residues). The disordered stretch occupies residues T390 to P423. The span at E408–E421 shows a compositional bias: basic and acidic residues. C2H2-type zinc fingers lie at residues F424–H446, Y452–H474, F480–H501, Y507–H529, Y535–H557, F563–H585, F591–H613, and F619–H642.

This sequence belongs to the krueppel C2H2-type zinc-finger protein family.

It is found in the nucleus. Its function is as follows. May be involved in transcriptional regulation. This is Gastrula zinc finger protein xFG20-1 from Xenopus laevis (African clawed frog).